We begin with the raw amino-acid sequence, 221 residues long: Phosphoribosylformylglycinamidine synthase subunit PurQ (221 aa).

The Glutamine amidotransferase type-1 domain maps to 6 to 221; sequence VGVVVFPGSN…LFTLKSLILK (216 aa). Residue Cys89 is the Nucleophile of the active site. Active-site residues include His197 and Glu199.

In terms of assembly, part of the FGAM synthase complex composed of 1 PurL, 1 PurQ and 2 PurS subunits.

Its subcellular location is the cytoplasm. The catalysed reaction is N(2)-formyl-N(1)-(5-phospho-beta-D-ribosyl)glycinamide + L-glutamine + ATP + H2O = 2-formamido-N(1)-(5-O-phospho-beta-D-ribosyl)acetamidine + L-glutamate + ADP + phosphate + H(+). It catalyses the reaction L-glutamine + H2O = L-glutamate + NH4(+). It functions in the pathway purine metabolism; IMP biosynthesis via de novo pathway; 5-amino-1-(5-phospho-D-ribosyl)imidazole from N(2)-formyl-N(1)-(5-phospho-D-ribosyl)glycinamide: step 1/2. Functionally, part of the phosphoribosylformylglycinamidine synthase complex involved in the purines biosynthetic pathway. Catalyzes the ATP-dependent conversion of formylglycinamide ribonucleotide (FGAR) and glutamine to yield formylglycinamidine ribonucleotide (FGAM) and glutamate. The FGAM synthase complex is composed of three subunits. PurQ produces an ammonia molecule by converting glutamine to glutamate. PurL transfers the ammonia molecule to FGAR to form FGAM in an ATP-dependent manner. PurS interacts with PurQ and PurL and is thought to assist in the transfer of the ammonia molecule from PurQ to PurL. The protein is Phosphoribosylformylglycinamidine synthase subunit PurQ of Prochlorococcus marinus (strain MIT 9312).